A 51-amino-acid chain; its full sequence is Perinerin (51 aa).

In terms of biological role, antibacterial activity against both Gram-negative and Gram-positive bacteria. Shows marked activity against P.aeruginosa, B.megaterium, A.viridans, moderate activity against E.coli K-12, S.aureus and M.luteus, and minor activity against P.vulgaris. Antifungal activity against P.heliothis. The chain is Perinerin from Perinereis aibuhitensis (Korean lugworm).